Here is a 113-residue protein sequence, read N- to C-terminus: Hydrogenase maturation factor HybF (113 aa).

Ni(2+) contacts are provided by histidine 2 and glutamate 3. Zn(2+) contacts are provided by cysteine 73, cysteine 76, cysteine 89, and cysteine 92.

Belongs to the HypA/HybF family. HybF subfamily.

Functionally, involved in the maturation of [NiFe] hydrogenases. Required for nickel insertion into the metal center of the hydrogenase. This chain is Hydrogenase maturation factor HybF, found in Proteus vulgaris.